We begin with the raw amino-acid sequence, 212 residues long: Protein DEPP1 (212 aa).

Disordered stretches follow at residues 20 to 39 (EEMLLGGPGQEPPPSPSLDD), 49 to 79 (QPTSVLDKATAQGQPRPPHRPAQACRKGRPA), and 113 to 176 (QEKQ…SDLR). Residues 113–124 (QEKQPSQRDLPR) show a composition bias toward basic and acidic residues.

In terms of tissue distribution, expressed in various tissues, including pancreas, placenta, ovary, testis and kidney.

The protein resides in the cytoplasm. It is found in the peroxisome. It localises to the mitochondrion. Its function is as follows. Acts as a critical modulator of FOXO3-induced autophagy via increased cellular ROS. This is Protein DEPP1 from Homo sapiens (Human).